A 422-amino-acid polypeptide reads, in one-letter code: Dihydroorotase (422 aa).

Residues His-59 and His-61 each coordinate Zn(2+). Residues 61-63 and Asn-93 contribute to the substrate site; that span reads HFR. Zn(2+) contacts are provided by Asp-150, His-177, and His-230. Asn-276 is a binding site for substrate. Asp-303 contacts Zn(2+). Asp-303 is a catalytic residue. Position 307 (His-307) interacts with substrate.

It belongs to the metallo-dependent hydrolases superfamily. DHOase family. Class I DHOase subfamily. Zn(2+) is required as a cofactor.

It catalyses the reaction (S)-dihydroorotate + H2O = N-carbamoyl-L-aspartate + H(+). The protein operates within pyrimidine metabolism; UMP biosynthesis via de novo pathway; (S)-dihydroorotate from bicarbonate: step 3/3. In terms of biological role, catalyzes the reversible cyclization of carbamoyl aspartate to dihydroorotate. This chain is Dihydroorotase, found in Streptococcus pneumoniae serotype 4 (strain ATCC BAA-334 / TIGR4).